The following is a 442-amino-acid chain: Trigger factor (442 aa).

Residues 165-250 (DDRVIIDFEG…LQKVMAPELP (86 aa)) enclose the PPIase FKBP-type domain.

The protein belongs to the FKBP-type PPIase family. Tig subfamily.

The protein resides in the cytoplasm. It catalyses the reaction [protein]-peptidylproline (omega=180) = [protein]-peptidylproline (omega=0). Involved in protein export. Acts as a chaperone by maintaining the newly synthesized protein in an open conformation. Functions as a peptidyl-prolyl cis-trans isomerase. The sequence is that of Trigger factor from Coxiella burnetii (strain CbuG_Q212) (Coxiella burnetii (strain Q212)).